The following is a 97-amino-acid chain: MQLRKEYLIAYDIEDNKTRTIIYKQLLAYGLKAVQKSVFWGYVSIAELNAIKRLFDSSLTISDKVFITRVNMHEQKLDYSFGYDDKTFKDWDEYGHI.

Mg(2+) is bound at residue aspartate 12.

The protein belongs to the CRISPR-associated endoribonuclease Cas2 protein family. Homodimer, forms a heterotetramer with a Cas1 homodimer. Mg(2+) is required as a cofactor.

CRISPR (clustered regularly interspaced short palindromic repeat) is an adaptive immune system that provides protection against mobile genetic elements (viruses, transposable elements and conjugative plasmids). CRISPR clusters contain sequences complementary to antecedent mobile elements and target invading nucleic acids. CRISPR clusters are transcribed and processed into CRISPR RNA (crRNA). Functions as a ssRNA-specific endoribonuclease. Involved in the integration of spacer DNA into the CRISPR cassette. This is CRISPR-associated endoribonuclease Cas2 1 from Francisella tularensis subsp. novicida (strain U112).